The chain runs to 180 residues: Large ribosomal subunit protein uL5 (180 aa).

This sequence belongs to the universal ribosomal protein uL5 family. In terms of assembly, part of the 50S ribosomal subunit; part of the 5S rRNA/L5/L18/L25 subcomplex. Contacts the 5S rRNA and the P site tRNA. Forms a bridge to the 30S subunit in the 70S ribosome.

This is one of the proteins that bind and probably mediate the attachment of the 5S RNA into the large ribosomal subunit, where it forms part of the central protuberance. In the 70S ribosome it contacts protein S13 of the 30S subunit (bridge B1b), connecting the 2 subunits; this bridge is implicated in subunit movement. Contacts the P site tRNA; the 5S rRNA and some of its associated proteins might help stabilize positioning of ribosome-bound tRNAs. The protein is Large ribosomal subunit protein uL5 of Leuconostoc citreum (strain KM20).